A 97-amino-acid polypeptide reads, in one-letter code: uncharacterized protein (97 aa).

The Stress-response A/B barrel domain occupies 2–95 (IRHLVLFKLN…EFATWVIADY (94 aa)).

This is an uncharacterized protein from Streptomyces coelicolor (strain ATCC BAA-471 / A3(2) / M145).